The following is a 343-amino-acid chain: MSVVKVGVNGFGTIGRRVALAITLQKDMKLVGVVKRTPDYAALYAASRGIPIYTPTAKEAEEFEKRGIKVGGTLRELLARVDVVVDATPEGQGAKNKPLYREAGVKQVYQGGEKPEVAEASFSTLCNYEESKGRGSLRVVSCNTTGLLRLICTLNREFGVESVRAVLVRRGADPKEVKKGPIDSIVLNPPTLPSHHAVDVRTVLPWLDIKTAAVAVPTTFMHMHHVTLKLAKPVEKREVLETLASAPRIMLVSSGDTGIKSTSQLVDAARLSRMGYDIPELVVFEESVAVDGREVMLFQAVHQESIVVPENIDAIRAVASSPLTLDETLKATDGSLGLRKTLW.

NAD(+)-binding positions include 13–14 (TI) and G112. A D-glyceraldehyde 3-phosphate-binding site is contributed by 141–143 (SCN). The active-site Nucleophile is the C142. Position 170 (R170) interacts with NAD(+). 196-197 (HA) is a binding site for D-glyceraldehyde 3-phosphate. Residue Q303 participates in NAD(+) binding.

This sequence belongs to the glyceraldehyde-3-phosphate dehydrogenase family. In terms of assembly, homotetramer.

The protein localises to the cytoplasm. The catalysed reaction is D-glyceraldehyde 3-phosphate + phosphate + NADP(+) = (2R)-3-phospho-glyceroyl phosphate + NADPH + H(+). It carries out the reaction D-glyceraldehyde 3-phosphate + phosphate + NAD(+) = (2R)-3-phospho-glyceroyl phosphate + NADH + H(+). The protein operates within carbohydrate degradation; glycolysis; pyruvate from D-glyceraldehyde 3-phosphate: step 1/5. The sequence is that of Glyceraldehyde-3-phosphate dehydrogenase (gap) from Aeropyrum pernix (strain ATCC 700893 / DSM 11879 / JCM 9820 / NBRC 100138 / K1).